A 349-amino-acid polypeptide reads, in one-letter code: tRNA N6-adenosine threonylcarbamoyltransferase (349 aa).

2 residues coordinate Fe cation: His111 and His115. Substrate contacts are provided by residues 134 to 138 (LVSGG), Asp167, Gly180, Asp184, and Asn279. Asp307 lines the Fe cation pocket.

Belongs to the KAE1 / TsaD family. It depends on Fe(2+) as a cofactor.

It is found in the cytoplasm. The enzyme catalyses L-threonylcarbamoyladenylate + adenosine(37) in tRNA = N(6)-L-threonylcarbamoyladenosine(37) in tRNA + AMP + H(+). Required for the formation of a threonylcarbamoyl group on adenosine at position 37 (t(6)A37) in tRNAs that read codons beginning with adenine. Is involved in the transfer of the threonylcarbamoyl moiety of threonylcarbamoyl-AMP (TC-AMP) to the N6 group of A37, together with TsaE and TsaB. TsaD likely plays a direct catalytic role in this reaction. The polypeptide is tRNA N6-adenosine threonylcarbamoyltransferase (Nostoc punctiforme (strain ATCC 29133 / PCC 73102)).